The primary structure comprises 419 residues: S-adenosylmethionine synthase (419 aa).

An ATP-binding site is contributed by His-15. Position 17 (Asp-17) interacts with Mg(2+). Position 43 (Glu-43) interacts with K(+). Residues Glu-56 and Gln-99 each coordinate L-methionine. Positions 99-109 (QSPEIAQGVSC) are flexible loop. ATP-binding positions include 173–175 (DGK), 253–254 (RF), Asp-262, 268–269 (RK), Ala-285, and Lys-289. Asp-262 contributes to the L-methionine binding site. Lys-293 contributes to the L-methionine binding site.

Belongs to the AdoMet synthase family. In terms of assembly, homotetramer; dimer of dimers. Mg(2+) serves as cofactor. It depends on K(+) as a cofactor.

It is found in the cytoplasm. The catalysed reaction is L-methionine + ATP + H2O = S-adenosyl-L-methionine + phosphate + diphosphate. It functions in the pathway amino-acid biosynthesis; S-adenosyl-L-methionine biosynthesis; S-adenosyl-L-methionine from L-methionine: step 1/1. In terms of biological role, catalyzes the formation of S-adenosylmethionine (AdoMet) from methionine and ATP. The overall synthetic reaction is composed of two sequential steps, AdoMet formation and the subsequent tripolyphosphate hydrolysis which occurs prior to release of AdoMet from the enzyme. This Gloeobacter violaceus (strain ATCC 29082 / PCC 7421) protein is S-adenosylmethionine synthase.